Consider the following 126-residue polypeptide: Large ribosomal subunit protein bL12 (126 aa).

The protein belongs to the bacterial ribosomal protein bL12 family. As to quaternary structure, homodimer. Part of the ribosomal stalk of the 50S ribosomal subunit. Forms a multimeric L10(L12)X complex, where L10 forms an elongated spine to which 2 to 4 L12 dimers bind in a sequential fashion. Binds GTP-bound translation factors.

In terms of biological role, forms part of the ribosomal stalk which helps the ribosome interact with GTP-bound translation factors. Is thus essential for accurate translation. In Geobacter sp. (strain M21), this protein is Large ribosomal subunit protein bL12.